The primary structure comprises 316 residues: MFLAAAAFLLSAPASASQGDKEPVYRDCVKHCVRANCTGARLRGFQSTQPPYMALTGWTCRDDCRYQCMWTTVGLYQAEGYSIPQFHGKWPFARFLCFEEPASALASLLNGLACLLMLLRYRSAVPCQSPMYHTITAFSLVSLNAWFWSTVFHTRDTYLTEKMDYFCASAVILYSIYLCCVRTLGLRRPAISSMVGVLLILAFTSHVSYLTFVSFDYGYNMAANASIGIINLLWWLCWCWLNRRILPYWWRCGMVVLLLHGLALLELLDFPPLFWVLDAHAVWHLSTVPVHFLFYSFLIDDSLHLLNTEKPGVKLD.

The N-terminal stretch at 1 to 19 (MFLAAAAFLLSAPASASQG) is a signal peptide. At 20–97 (DKEPVYRDCV…GKWPFARFLC (78 aa)) the chain is on the lumenal side. N-linked (GlcNAc...) asparagine glycosylation occurs at N36. A helical transmembrane segment spans residues 98–118 (FEEPASALASLLNGLACLLML). Over 119 to 131 (LRYRSAVPCQSPM) the chain is Cytoplasmic. The helical transmembrane segment at 132 to 152 (YHTITAFSLVSLNAWFWSTVF) threads the bilayer. Over 153 to 165 (HTRDTYLTEKMDY) the chain is Lumenal. A helical membrane pass occupies residues 166 to 186 (FCASAVILYSIYLCCVRTLGL). The Cytoplasmic segment spans residues 187 to 194 (RRPAISSM). The helical transmembrane segment at 195–215 (VGVLLILAFTSHVSYLTFVSF) threads the bilayer. The Lumenal segment spans residues 216-220 (DYGYN). The helical transmembrane segment at 221–241 (MAANASIGIINLLWWLCWCWL) threads the bilayer. Topologically, residues 242–254 (NRRILPYWWRCGM) are cytoplasmic. The helical transmembrane segment at 255–275 (VVLLLHGLALLELLDFPPLFW) threads the bilayer. Residues 276-278 (VLD) lie on the Lumenal side of the membrane. The chain crosses the membrane as a helical span at residues 279–299 (AHAVWHLSTVPVHFLFYSFLI). Residues 300–316 (DDSLHLLNTEKPGVKLD) are Cytoplasmic-facing.

It belongs to the PGAP3 family.

It is found in the golgi apparatus membrane. Its function is as follows. Involved in the fatty acid remodeling steps of GPI-anchor maturation where the unsaturated acyl chain at sn-2 of inositol phosphate is replaced by a saturated stearoyl chain. May catalyze the first step of the fatty acid remodeling, by removing the unsaturated acyl chain at sn-2 of inositol phosphate, generating a lyso-GPI intermediate. The fatty acid remodeling steps is critical for the integration of GPI-APs into lipid rafts. This is GPI-specific phospholipase A2-like PGAP3 from Danio rerio (Zebrafish).